The sequence spans 319 residues: MKRIGILTSGGDAPGMNAAVRAVARKAMHEGLEVYGINYGFAGLVAGDIFKMNESTVGDKIQRGGTMLYSARYPQFAQEEGQLRGVEQLNKFGIEALVVIGGDGSYHGALALTRHGFNTIGLPGTIDNDIPYTDFTIGFDTAVNTVVEAVDRLRDTAASHERTFVIEVMGREAGDIALWSGVAGGAEDVIIPEHDFDVKKIASKLQSSRERGQKHAVILLAEGVMHADQFAKELAAHGDFQLRSTVLGHIVRGGAPSARDRVLASQMGSYAVELLLQGKGALAVGIENNKITAHDVRTLFDAKHHAELSLYTLAEELTF.

ATP is bound at residue G11. 21–25 (RAVAR) contributes to the ADP binding site. ATP contacts are provided by residues 72 to 73 (RY) and 102 to 105 (GDGS). Mg(2+) is bound at residue D103. Residue 125 to 127 (TID) coordinates substrate. The Proton acceptor role is filled by D127. R154 lines the ADP pocket. Residues R162 and 169-171 (MGR) contribute to the substrate site. Residues 185–187 (GAE) and R211 each bind ADP. Residues E222, R243, and 249-252 (HIVR) contribute to the substrate site.

This sequence belongs to the phosphofructokinase type A (PFKA) family. ATP-dependent PFK group I subfamily. Prokaryotic clade 'B1' sub-subfamily. As to quaternary structure, homotetramer. The cofactor is Mg(2+).

The protein resides in the cytoplasm. The catalysed reaction is beta-D-fructose 6-phosphate + ATP = beta-D-fructose 1,6-bisphosphate + ADP + H(+). Its pathway is carbohydrate degradation; glycolysis; D-glyceraldehyde 3-phosphate and glycerone phosphate from D-glucose: step 3/4. Allosterically activated by ADP and other diphosphonucleosides, and allosterically inhibited by phosphoenolpyruvate. Functionally, catalyzes the phosphorylation of D-fructose 6-phosphate to fructose 1,6-bisphosphate by ATP, the first committing step of glycolysis. The polypeptide is ATP-dependent 6-phosphofructokinase (Lacticaseibacillus casei (strain BL23) (Lactobacillus casei)).